A 503-amino-acid chain; its full sequence is Putative ribose/galactose/methyl galactoside import ATP-binding protein (503 aa).

2 ABC transporter domains span residues 7–244 (LEMI…VGRE) and 254–498 (VPIG…TGQL). An ATP-binding site is contributed by 39 to 46 (GENGAGKS).

It belongs to the ABC transporter superfamily. Carbohydrate importer 2 (CUT2) (TC 3.A.1.2) family.

It localises to the cell membrane. The enzyme catalyses D-ribose(out) + ATP + H2O = D-ribose(in) + ADP + phosphate + H(+). It catalyses the reaction D-galactose(out) + ATP + H2O = D-galactose(in) + ADP + phosphate + H(+). Functionally, part of an ABC transporter complex involved in carbohydrate import. Could be involved in ribose, galactose and/or methyl galactoside import. Responsible for energy coupling to the transport system. This Geobacillus kaustophilus (strain HTA426) protein is Putative ribose/galactose/methyl galactoside import ATP-binding protein.